The following is a 1133-amino-acid chain: uncharacterized protein (1133 aa).

Disordered stretches follow at residues Gln33–Ser83, Pro305–Ser629, Gly679–Arg723, and Ile736–Val817. A compositionally biased stretch (low complexity) spans Asn39–Ser83. Residues Asn40 to Asn308 constitute a DNA-binding region (NDT80). Over residues Pro305–Pro316 the composition is skewed to polar residues. Low complexity predominate over residues Ile317–Ser384. A compositionally biased stretch (polar residues) spans Ile401–Tyr417. Residues Asn418–Asn452 show a composition bias toward low complexity. Polar residues predominate over residues His453–Phe470. Composition is skewed to low complexity over residues Asn473–Ser615 and Asn686–Asn714. A compositionally biased stretch (polar residues) spans Ile736–Thr747. Residues Gln757–Gln771 are compositionally biased toward pro residues. The segment covering Pro772–Pro808 has biased composition (low complexity). The Peptidase S74 domain occupies Ser909–Leu1020. A helical transmembrane segment spans residues Ile1055–Ile1075. The tract at residues Ser1107–Lys1133 is disordered.

The protein resides in the membrane. This is an uncharacterized protein from Dictyostelium discoideum (Social amoeba).